Here is a 548-residue protein sequence, read N- to C-terminus: MAKELRFGDDARLQMLAGVNALADAVQVTMGPRGRNVVLEKSYGAPTVTKDGVSVAKEIEFEHRFMNMGAQMVKEVASKTSDTAGDGTTTATVLARSILVEGHKAVAAGMNPMDLKRGIDKAVLAVTKKLQAMSKPCKDSKAIAQVGTISANSDEAIGAIIAEAMEKVGKEGVITVEDGNGLENELSVVEGMQFDRGYISPYFINNQQNMSCELEHPFILLVDKKVSSIREMLSVLEGVAKSGRPLLIIAEDVEGEALATLVVNNMRGIVKVCAVKAPGFGDRRKAMLQDIAILTKGQVISEEIGKSLEGATLEDLGSAKRIVVTKENTTIIDGEGKATEINARITQIRAQMEETTSDYDREKLQERVAKLAGGVAVIKVGAATEVEMKEKKARVEDALHATRAAVEEGIVAGGGVALIRAQKALDSLKGDNDDQNMGINILRRAIESPMRQIVTNAGYEASVVVNKVAEHKDNYGFNAATGEYGDMVEMGILDPTKVTRMALQNAASVASLMLTTECMVADLPKKEEGVGAGDMGGMGGMGGMGGMM.

ATP-binding positions include threonine 29–proline 32, lysine 50, aspartate 86–threonine 90, glycine 414, asparagine 478–alanine 480, and aspartate 494.

The protein belongs to the chaperonin (HSP60) family. In terms of assembly, forms a cylinder of 14 subunits composed of two heptameric rings stacked back-to-back. Interacts with the co-chaperonin GroES.

Its subcellular location is the cytoplasm. The enzyme catalyses ATP + H2O + a folded polypeptide = ADP + phosphate + an unfolded polypeptide.. Its function is as follows. Together with its co-chaperonin GroES, plays an essential role in assisting protein folding. The GroEL-GroES system forms a nano-cage that allows encapsulation of the non-native substrate proteins and provides a physical environment optimized to promote and accelerate protein folding. Functionally, may play a protective role against the defense mechanisms generated by the infected macrophages. The sequence is that of Chaperonin GroEL from Legionella pneumophila subsp. pneumophila (strain Philadelphia 1 / ATCC 33152 / DSM 7513).